The following is a 197-amino-acid chain: GTP cyclohydrolase-2 (197 aa).

GTP is bound at residue 50–54; it reads RIHSE. Residues cysteine 55, cysteine 66, and cysteine 68 each coordinate Zn(2+). Residues glutamine 71, 93–95, and threonine 115 each bind GTP; that span reads EGR. The Proton acceptor role is filled by aspartate 127. The active-site Nucleophile is arginine 129. Threonine 150 and lysine 155 together coordinate GTP.

The protein belongs to the GTP cyclohydrolase II family. Zn(2+) serves as cofactor.

The enzyme catalyses GTP + 4 H2O = 2,5-diamino-6-hydroxy-4-(5-phosphoribosylamino)-pyrimidine + formate + 2 phosphate + 3 H(+). It participates in cofactor biosynthesis; riboflavin biosynthesis; 5-amino-6-(D-ribitylamino)uracil from GTP: step 1/4. Catalyzes the conversion of GTP to 2,5-diamino-6-ribosylamino-4(3H)-pyrimidinone 5'-phosphate (DARP), formate and pyrophosphate. The protein is GTP cyclohydrolase-2 of Neisseria meningitidis serogroup C (strain 053442).